Reading from the N-terminus, the 295-residue chain is Protein transport protein SSO2 (295 aa).

Residues 1 to 18 (MSNPYQNSQNGYQQNNSY) are compositionally biased toward low complexity. Residues 1–31 (MSNPYQNSQNGYQQNNSYELNNYPNKQYSSS) form a disordered region. The Cytoplasmic portion of the chain corresponds to 1-270 (MSNPYQNSQN…SAKSARKKKL (270 aa)). Residues 19 to 31 (ELNNYPNKQYSSS) are compositionally biased toward polar residues. Positions 33–110 (EDDFVQFMNE…NRIKNVQTQA (78 aa)) form a coiled coil. The t-SNARE coiled-coil homology domain occupies 196-258 (LNEVQVRHRE…EQGVGHTNKA (63 aa)). The helical; Anchor for type IV membrane protein transmembrane segment at 271-291 (WCFFICLLIVIILAVILGAYF) threads the bilayer. The Extracellular segment spans residues 292–295 (GTRK).

Belongs to the syntaxin family.

It is found in the membrane. Its function is as follows. Late secretory t-SNARE protein required for secretion and proper cytokinesis. Plays an important role in the secretion of virulence-associated extracellular enzymes and vesicle-mediated polarized hyphal growth. The sequence is that of Protein transport protein SSO2 (SSO2) from Candida albicans (strain SC5314 / ATCC MYA-2876) (Yeast).